The following is a 332-amino-acid chain: 4-hydroxy-3-methylbut-2-enyl diphosphate reductase (332 aa).

A [4Fe-4S] cluster-binding site is contributed by C34. (2E)-4-hydroxy-3-methylbut-2-enyl diphosphate contacts are provided by H63 and H96. Residues H63 and H96 each coordinate dimethylallyl diphosphate. Residues H63 and H96 each coordinate isopentenyl diphosphate. Residue C118 participates in [4Fe-4S] cluster binding. H146 contacts (2E)-4-hydroxy-3-methylbut-2-enyl diphosphate. Position 146 (H146) interacts with dimethylallyl diphosphate. An isopentenyl diphosphate-binding site is contributed by H146. Catalysis depends on E148, which acts as the Proton donor. Residue T186 participates in (2E)-4-hydroxy-3-methylbut-2-enyl diphosphate binding. C216 is a binding site for [4Fe-4S] cluster. (2E)-4-hydroxy-3-methylbut-2-enyl diphosphate is bound by residues S244, S245, N246, and S289. Positions 244, 245, 246, and 289 each coordinate dimethylallyl diphosphate. Isopentenyl diphosphate is bound by residues S244, S245, N246, and S289.

The protein belongs to the IspH family. [4Fe-4S] cluster is required as a cofactor.

It carries out the reaction isopentenyl diphosphate + 2 oxidized [2Fe-2S]-[ferredoxin] + H2O = (2E)-4-hydroxy-3-methylbut-2-enyl diphosphate + 2 reduced [2Fe-2S]-[ferredoxin] + 2 H(+). The enzyme catalyses dimethylallyl diphosphate + 2 oxidized [2Fe-2S]-[ferredoxin] + H2O = (2E)-4-hydroxy-3-methylbut-2-enyl diphosphate + 2 reduced [2Fe-2S]-[ferredoxin] + 2 H(+). Its pathway is isoprenoid biosynthesis; dimethylallyl diphosphate biosynthesis; dimethylallyl diphosphate from (2E)-4-hydroxy-3-methylbutenyl diphosphate: step 1/1. The protein operates within isoprenoid biosynthesis; isopentenyl diphosphate biosynthesis via DXP pathway; isopentenyl diphosphate from 1-deoxy-D-xylulose 5-phosphate: step 6/6. Catalyzes the conversion of 1-hydroxy-2-methyl-2-(E)-butenyl 4-diphosphate (HMBPP) into a mixture of isopentenyl diphosphate (IPP) and dimethylallyl diphosphate (DMAPP). Acts in the terminal step of the DOXP/MEP pathway for isoprenoid precursor biosynthesis. This Mycolicibacterium paratuberculosis (strain ATCC BAA-968 / K-10) (Mycobacterium paratuberculosis) protein is 4-hydroxy-3-methylbut-2-enyl diphosphate reductase.